Consider the following 138-residue polypeptide: Endoribonuclease YbeY (138 aa).

3 residues coordinate Zn(2+): His105, His109, and Asp115.

Belongs to the endoribonuclease YbeY family. It depends on Zn(2+) as a cofactor.

It is found in the cytoplasm. Its function is as follows. Single strand-specific metallo-endoribonuclease involved in late-stage 70S ribosome quality control and in maturation of the 3' terminus of the 16S rRNA. This is Endoribonuclease YbeY from Chlorobium phaeobacteroides (strain BS1).